Consider the following 141-residue polypeptide: Nucleoside diphosphate kinase (141 aa).

The ATP site is built by Lys11, Phe59, Arg87, Thr93, Arg104, and Asn114. Catalysis depends on His117, which acts as the Pros-phosphohistidine intermediate.

The protein belongs to the NDK family. Homotetramer. Mg(2+) serves as cofactor.

The protein resides in the cytoplasm. The enzyme catalyses a 2'-deoxyribonucleoside 5'-diphosphate + ATP = a 2'-deoxyribonucleoside 5'-triphosphate + ADP. It carries out the reaction a ribonucleoside 5'-diphosphate + ATP = a ribonucleoside 5'-triphosphate + ADP. In terms of biological role, major role in the synthesis of nucleoside triphosphates other than ATP. The ATP gamma phosphate is transferred to the NDP beta phosphate via a ping-pong mechanism, using a phosphorylated active-site intermediate. The protein is Nucleoside diphosphate kinase of Cupriavidus metallidurans (strain ATCC 43123 / DSM 2839 / NBRC 102507 / CH34) (Ralstonia metallidurans).